We begin with the raw amino-acid sequence, 189 residues long: Parkinson disease protein 7 (189 aa).

An N-acetylalanine modification is found at alanine 2. S-palmitoyl cysteine attachment occurs at residues cysteine 46 and cysteine 53. Position 67 is a phosphotyrosine (tyrosine 67). Cysteine 106 (nucleophile) is an active-site residue. At cysteine 106 the chain carries Cysteine sulfinic acid (-SO2H); alternate. Cysteine 106 carries the S-palmitoyl cysteine; alternate lipid modification. The active site involves histidine 126. Lysine 130 participates in a covalent cross-link: Glycyl lysine isopeptide (Lys-Gly) (interchain with G-Cter in SUMO). The residue at position 148 (lysine 148) is an N6-acetyllysine. Lysine 182 carries the N6-succinyllysine modification.

Belongs to the peptidase C56 family. In terms of assembly, homodimer. Binds EFCAB6/DJBP and PIAS2. Part of a ternary complex containing PARK7, EFCAB6/DJBP and AR. Interacts (via N-terminus) with OTUD7B. Interacts with BBS1, HIPK1, CLCF1 and MTERF. Forms a complex with PINK1 and PRKN. Interacts (via C-terminus) with NCF1; the interaction is enhanced by LPS and modulates NCF1 phosphorylation and membrane translocation. Interacts with NENF. Deglycase activity does not require glutathione as a cofactor, however, glycated glutathione constitutes a PARK7 substrate. serves as cofactor. In terms of processing, sumoylated on Lys-130 by PIAS2 or PIAS4; which is enhanced after ultraviolet irradiation and essential for cell-growth promoting activity and transforming activity. Cys-106 is easily oxidized to sulfinic acid. Post-translationally, undergoes cleavage of a C-terminal peptide and subsequent activation of protease activity in response to oxidative stress. Highly expressed in pancreas, kidney, skeletal muscle, liver, testis and heart. Detected at slightly lower levels in placenta and brain (at protein level). Detected in astrocytes, Sertoli cells, spermatogonia, spermatids and spermatozoa. Expressed by pancreatic islets at higher levels than surrounding exocrine tissues.

The protein localises to the cell membrane. It is found in the cytoplasm. The protein resides in the nucleus. It localises to the membrane raft. Its subcellular location is the mitochondrion. The protein localises to the endoplasmic reticulum. It carries out the reaction N(omega)-(1-hydroxy-2-oxopropyl)-L-arginyl-[protein] + H2O = lactate + L-arginyl-[protein] + H(+). The enzyme catalyses N(6)-(1-hydroxy-2-oxopropyl)-L-lysyl-[protein] + H2O = lactate + L-lysyl-[protein] + H(+). The catalysed reaction is S-(1-hydroxy-2-oxopropyl)-L-cysteinyl-[protein] + H2O = lactate + L-cysteinyl-[protein] + H(+). It catalyses the reaction N(omega)-(1-hydroxy-2-oxoethyl)-L-arginyl-[protein] + H2O = L-arginyl-[protein] + glycolate + H(+). It carries out the reaction N(6)-(1-hydroxy-2-oxoethyl)-L-lysyl-[protein] + H2O = glycolate + L-lysyl-[protein] + H(+). The enzyme catalyses S-(1-hydroxy-2-oxoethyl)-L-cysteinyl-[protein] + H2O = glycolate + L-cysteinyl-[protein] + H(+). The catalysed reaction is N(2)-(1-hydroxy-2-oxopropyl)-dGTP + H2O = lactate + dGTP + H(+). It catalyses the reaction N(2)-(1-hydroxy-2-oxopropyl)-GTP + H2O = lactate + GTP + H(+). It carries out the reaction N(2)-(1-hydroxy-2-oxopropyl)-GDP + H2O = lactate + GDP + H(+). The enzyme catalyses N(2)-(1-hydroxy-2-oxopropyl)-GMP + H2O = lactate + GMP + H(+). The catalysed reaction is N(2)-(1-hydroxy-2-oxoethyl)-dGTP + H2O = dGTP + glycolate + H(+). It catalyses the reaction N(2)-(1-hydroxy-2-oxoethyl)-GTP + H2O = glycolate + GTP + H(+). It carries out the reaction N(2)-(1-hydroxy-2-oxoethyl)-GDP + H2O = glycolate + GDP + H(+). The enzyme catalyses N(2)-(1-hydroxy-2-oxoethyl)-GMP + H2O = glycolate + GMP + H(+). The catalysed reaction is an N(2)-(1-hydroxy-2-oxopropyl)-guanosine in RNA + H2O = a guanosine in RNA + lactate + H(+). It catalyses the reaction an N(2)-(1-hydroxy-2-oxopropyl)-2'-deoxyguanosine in DNA + H2O = a 2'-deoxyguanosine in DNA + lactate + H(+). It carries out the reaction an N(2)-(1-hydroxy-2-oxoethyl)-guanosine in RNA + H2O = a guanosine in RNA + glycolate + H(+). The enzyme catalyses an N(2)-(1-hydroxy-2-oxoethyl)-2'-deoxyguanosine in DNA + H2O = a 2'-deoxyguanosine in DNA + glycolate + H(+). Multifunctional protein with controversial molecular function which plays an important role in cell protection against oxidative stress and cell death acting as oxidative stress sensor and redox-sensitive chaperone and protease. It is involved in neuroprotective mechanisms like the stabilization of NFE2L2 and PINK1 proteins, male fertility as a positive regulator of androgen signaling pathway as well as cell growth and transformation through, for instance, the modulation of NF-kappa-B signaling pathway. Has been described as a protein and nucleotide deglycase that catalyzes the deglycation of the Maillard adducts formed between amino groups of proteins or nucleotides and reactive carbonyl groups of glyoxals. But this function is rebuted by other works. As a protein deglycase, repairs methylglyoxal- and glyoxal-glycated proteins, and releases repaired proteins and lactate or glycolate, respectively. Deglycates cysteine, arginine and lysine residues in proteins, and thus reactivates these proteins by reversing glycation by glyoxals. Acts on early glycation intermediates (hemithioacetals and aminocarbinols), preventing the formation of advanced glycation endproducts (AGE) that cause irreversible damage. Also functions as a nucleotide deglycase able to repair glycated guanine in the free nucleotide pool (GTP, GDP, GMP, dGTP) and in DNA and RNA. Is thus involved in a major nucleotide repair system named guanine glycation repair (GG repair), dedicated to reversing methylglyoxal and glyoxal damage via nucleotide sanitization and direct nucleic acid repair. Protects histones from adduction by methylglyoxal, controls the levels of methylglyoxal-derived argininine modifications on chromatin. Able to remove the glycations and restore histone 3, histone glycation disrupts both local and global chromatin architecture by altering histone-DNA interactions as well as histone acetylation and ubiquitination levels. Displays a very low glyoxalase activity that may reflect its deglycase activity. Eliminates hydrogen peroxide and protects cells against hydrogen peroxide-induced cell death. Required for correct mitochondrial morphology and function as well as for autophagy of dysfunctional mitochondria. Plays a role in regulating expression or stability of the mitochondrial uncoupling proteins SLC25A14 and SLC25A27 in dopaminergic neurons of the substantia nigra pars compacta and attenuates the oxidative stress induced by calcium entry into the neurons via L-type channels during pacemaking. Regulates astrocyte inflammatory responses, may modulate lipid rafts-dependent endocytosis in astrocytes and neuronal cells. In pancreatic islets, involved in the maintenance of mitochondrial reactive oxygen species (ROS) levels and glucose homeostasis in an age- and diet dependent manner. Protects pancreatic beta cells from cell death induced by inflammatory and cytotoxic setting. Binds to a number of mRNAs containing multiple copies of GG or CC motifs and partially inhibits their translation but dissociates following oxidative stress. Metal-binding protein able to bind copper as well as toxic mercury ions, enhances the cell protection mechanism against induced metal toxicity. In macrophages, interacts with the NADPH oxidase subunit NCF1 to direct NADPH oxidase-dependent ROS production, and protects against sepsis. The chain is Parkinson disease protein 7 from Homo sapiens (Human).